A 1359-amino-acid polypeptide reads, in one-letter code: Regulatory-associated protein of TOR 2 (1359 aa).

2 disordered regions span residues 17–64 (SSAA…PQVA) and 782–819 (SDNS…QHSD). Over residues 32-50 (HLVDDHLPVENGPDPRRDV) the composition is skewed to basic and acidic residues. Residues 782 to 805 (SDNSATARDGRISTSSPIATNSIM) are compositionally biased toward polar residues. Positions 806-819 (HGSPQSDDSSQHSD) are enriched in low complexity. 7 WD repeats span residues 1041 to 1080 (RFEL…PVNT), 1087 to 1127 (SDRG…GGQK), 1139 to 1178 (RSAG…VNTI), 1181 to 1221 (TADS…RLVY), 1228 to 1269 (PRSE…EPYL), 1273 to 1312 (AHRG…LTII), and 1321 to 1359 (QRIG…YQVR).

The protein belongs to the WD repeat RAPTOR family. As to quaternary structure, the target of rapamycin complex 1 (TORC1) is composed of at least RAPTOR, LST8 and TOR.

Component of TORC1 complex, which is an essential cell growth regulator that controls plant development. Acts by recruiting substrates for TOR. Acts by activating transcription, protein synthesis and ribosome biogenesis, and inhibiting mRNA degradation and autophagy. This Oryza sativa subsp. japonica (Rice) protein is Regulatory-associated protein of TOR 2 (RAPTOR2).